Here is a 129-residue protein sequence, read N- to C-terminus: Aldose 1-epimerase (129 aa).

The protein belongs to the aldose epimerase family.

It carries out the reaction alpha-D-glucose = beta-D-glucose. Its pathway is carbohydrate metabolism; hexose metabolism. Mutarotase converts alpha-aldose to the beta-anomer. It is active on D-glucose, L-arabinose, D-xylose, D-galactose, maltose and lactose. The protein is Aldose 1-epimerase (galM) of Lactobacillus helveticus (Lactobacillus suntoryeus).